The following is a 175-amino-acid chain: Large ribosomal subunit protein uL6 (175 aa).

This sequence belongs to the universal ribosomal protein uL6 family. In terms of assembly, part of the 50S ribosomal subunit.

In terms of biological role, this protein binds to the 23S rRNA, and is important in its secondary structure. It is located near the subunit interface in the base of the L7/L12 stalk, and near the tRNA binding site of the peptidyltransferase center. This Xylella fastidiosa (strain M23) protein is Large ribosomal subunit protein uL6.